Here is a 561-residue protein sequence, read N- to C-terminus: 7-keto 8-aminopelargonic acid transporter (561 aa).

Topologically, residues 1-49 (MNRVGAVFLFVYERNFFLSIVPDRHRTEIRMSSSERSEVKFDKHFNWWS) are cytoplasmic. A helical membrane pass occupies residues 50 to 70 (LLGIAFSLSCSWVGISASMAV). Topologically, residues 71 to 77 (GIASGGP) are extracellular. Residues 78 to 98 (LLIIYGLIIAAFFSLMCGISL) form a helical membrane-spanning segment. The Cytoplasmic segment spans residues 99–160 (GDFAAILPNS…NVEVSSKFQK (62 aa)). A helical transmembrane segment spans residues 161–181 (VSSMVVGLLNYFGAIFTTASI). Residues 182–204 (CSSLSMSCIGIHKLLHPDYELKH) lie on the Extracellular side of the membrane. Residues 205 to 225 (WHVFVGYECINAVLTLFNIYS) traverse the membrane as a helical segment. The Cytoplasmic portion of the chain corresponds to 226 to 230 (TPLPY). The helical transmembrane segment at 231–251 (ISQFGLYTSLLSFAMTFIICI) threads the bilayer. Over 252–281 (VSRSDNTVDPWPKASNIFGSFDNQTGWNSS) the chain is Extracellular. The helical transmembrane segment at 282-302 (GMAFVVGLVNPIWAFVGIDSA) threads the bilayer. Residues 303 to 321 (THMIDEVGYSKSRFLVPKV) lie on the Cytoplasmic side of the membrane. Residues 322-342 (IITTIIVGFVTSFIYCVGLFF) form a helical membrane-spanning segment. Residues 343-369 (CITDQTAVVESILPIVEIFYQATGNRN) lie on the Extracellular side of the membrane. The chain crosses the membrane as a helical span at residues 370–390 (LSVFLQCMCITTGFVSGIASG). Topologically, residues 391–439 (TWQSRILQSFGKSYAPFYKEGSLGNKSLKKLAVLTPGFKSPLYAHFLSQ) are cytoplasmic. The chain crosses the membrane as a helical span at residues 440–460 (ICVTIIGCIFMGSSTAFNAII). Thr-461 is a topological domain (extracellular). A helical transmembrane segment spans residues 462-482 (ACITLLLMSYAVPSFIFLFVI). The Cytoplasmic segment spans residues 483 to 507 (KKEKFIHRIESDVNCVSRPNRRRMS). The chain crosses the membrane as a helical span at residues 508 to 528 (MIPHIICILWTLFCLVFLSFP). The Extracellular portion of the chain corresponds to 529–540 (YTLPVTAGNMNY). The chain crosses the membrane as a helical span at residues 541-560 (TSVVYAVVFCIISIVVFPTC). Ile-561 is a topological domain (cytoplasmic).

This sequence belongs to the amino acid-polyamine-organocation (APC) superfamily.

It localises to the membrane. Functionally, transport into the cell of 7-keto 8-aminopelargonic acid. In Saccharomyces cerevisiae (strain ATCC 204508 / S288c) (Baker's yeast), this protein is 7-keto 8-aminopelargonic acid transporter (BIO5).